Reading from the N-terminus, the 188-residue chain is Small ribosomal subunit protein eS8 (188 aa).

Residues 1-34 (MGISRDSRHKRRLTGGRYPVHKKKRKYELGRPSS) form a disordered region. Basic residues predominate over residues 7–26 (SRHKRRLTGGRYPVHKKKRK).

It belongs to the eukaryotic ribosomal protein eS8 family.

The chain is Small ribosomal subunit protein eS8 (RPS8) from Theileria parva (East coast fever infection agent).